We begin with the raw amino-acid sequence, 269 residues long: Imidazole glycerol phosphate synthase subunit HisF (269 aa).

Catalysis depends on residues Asp23 and Asp142.

Belongs to the HisA/HisF family. As to quaternary structure, heterodimer of HisH and HisF.

It is found in the cytoplasm. It carries out the reaction 5-[(5-phospho-1-deoxy-D-ribulos-1-ylimino)methylamino]-1-(5-phospho-beta-D-ribosyl)imidazole-4-carboxamide + L-glutamine = D-erythro-1-(imidazol-4-yl)glycerol 3-phosphate + 5-amino-1-(5-phospho-beta-D-ribosyl)imidazole-4-carboxamide + L-glutamate + H(+). It functions in the pathway amino-acid biosynthesis; L-histidine biosynthesis; L-histidine from 5-phospho-alpha-D-ribose 1-diphosphate: step 5/9. In terms of biological role, IGPS catalyzes the conversion of PRFAR and glutamine to IGP, AICAR and glutamate. The HisF subunit catalyzes the cyclization activity that produces IGP and AICAR from PRFAR using the ammonia provided by the HisH subunit. This chain is Imidazole glycerol phosphate synthase subunit HisF, found in Bordetella pertussis (strain Tohama I / ATCC BAA-589 / NCTC 13251).